A 362-amino-acid polypeptide reads, in one-letter code: Chorismate synthase (362 aa).

The tract at residues 39–59 is disordered; sequence ADLQGDLDRRKPGTSRYTTPR. NADP(+)-binding residues include Arg48 and Arg54. FMN is bound by residues 125–127, 238–239, Gly278, 293–297, and Arg319; these read RSS, NA, and KPTSS.

It belongs to the chorismate synthase family. Homotetramer. It depends on FMNH2 as a cofactor.

It catalyses the reaction 5-O-(1-carboxyvinyl)-3-phosphoshikimate = chorismate + phosphate. It participates in metabolic intermediate biosynthesis; chorismate biosynthesis; chorismate from D-erythrose 4-phosphate and phosphoenolpyruvate: step 7/7. Functionally, catalyzes the anti-1,4-elimination of the C-3 phosphate and the C-6 proR hydrogen from 5-enolpyruvylshikimate-3-phosphate (EPSP) to yield chorismate, which is the branch point compound that serves as the starting substrate for the three terminal pathways of aromatic amino acid biosynthesis. This reaction introduces a second double bond into the aromatic ring system. The polypeptide is Chorismate synthase (Aeromonas hydrophila subsp. hydrophila (strain ATCC 7966 / DSM 30187 / BCRC 13018 / CCUG 14551 / JCM 1027 / KCTC 2358 / NCIMB 9240 / NCTC 8049)).